The primary structure comprises 310 residues: Putative carboxypeptidase SCO6489 (310 aa).

Residue serine 116 is the Nucleophile of the active site. Active-site charge relay system residues include glutamate 212 and histidine 277.

The protein belongs to the peptidase S66 family.

This chain is Putative carboxypeptidase SCO6489, found in Streptomyces coelicolor (strain ATCC BAA-471 / A3(2) / M145).